Here is a 146-residue protein sequence, read N- to C-terminus: Aminoglycoside N(6')-acetyltransferase type 1 (146 aa).

The N-acetyltransferase domain maps to 1 to 146 (MIVICDHDNL…RVVFYRKTLG (146 aa)). Substrate is bound by residues Trp21, Tyr66, Glu79, and Asp115. Asn120 contributes to the acetyl-CoA binding site. Residue Glu136 participates in substrate binding.

In terms of assembly, homodimer.

The catalysed reaction is kanamycin B + acetyl-CoA = N(6')-acetylkanamycin B + CoA + H(+). Functionally, catalyzes the transfer of an acetyl group from acetyl-CoA to the 6'-amino group of aminoglycoside molecules conferring resistance to antibiotics containing the purpurosamine ring including amikacin, tobramycin, netilmicin, isepamicin and sisomicin. This Serratia marcescens protein is Aminoglycoside N(6')-acetyltransferase type 1.